A 206-amino-acid chain; its full sequence is dCTP deaminase, dUMP-forming (206 aa).

DCTP is bound by residues Arg-117–Arg-122, Asp-135, Thr-143–Glu-145, Gln-163, Tyr-177, Lys-184, and Gln-188. The Proton donor/acceptor role is filled by Glu-145.

Belongs to the dCTP deaminase family. In terms of assembly, homotrimer.

The enzyme catalyses dCTP + 2 H2O = dUMP + NH4(+) + diphosphate. Its pathway is pyrimidine metabolism; dUMP biosynthesis; dUMP from dCTP: step 1/1. In terms of biological role, bifunctional enzyme that catalyzes both the deamination of dCTP to dUTP and the hydrolysis of dUTP to dUMP without releasing the toxic dUTP intermediate. In Methanococcus maripaludis (strain C7 / ATCC BAA-1331), this protein is dCTP deaminase, dUMP-forming.